A 393-amino-acid chain; its full sequence is MNSSCKTRVFNIISIIMVSMLILSLGAFANNNKAKADSHSKQLEINVKSDKVPQKVKDLAQQQFAGYAKALDKQSNAKTGKYELGEAFKIYKFNGEEDNSYYYPVIKDGKIVYTLTLSPKNKDDLNKSKEDMNYSVKISNFIAKDLDQIKDKNSNITVLTDEKGFYFEEDGKVRLVKATPLANNIKEKESAKTVSPQLKQELKTTVTPTKVEENEAIQEDQVQYENTLKNFKIREQQFDNSWCAGFSMAALLNATKNTDTYNAHDIMRTLYPEVSEQDLPNCATFPNQMIEYGKSQGRDIHYQEGVPSYNQVDQLTKDNVGIMILAQSVSQNPNDPHLGHALAVVANAKINDQEKLIYWNPWDTELSIQDADSSLLHLSFNRDYNWYGSMIGY.

A signal peptide spans 1–36; sequence MNSSCKTRVFNIISIIMVSMLILSLGAFANNNKAKA. The propeptide occupies 37 to 219; sequence DSHSKQLEIN…KVEENEAIQE (183 aa). Active-site residues include C243, H340, and N360.

It belongs to the peptidase C47 family. As to quaternary structure, in the cytoplasm, prematurely activated/folded SspB forms a stable non-covalent complex with SspC. In terms of processing, proteolytically cleaved by staphylococcal serine protease (SspA).

It localises to the secreted. Its activity is regulated as follows. Prematurely activated/folded staphopain B is inhibited by staphostatin B (SspC), which is probably required to protect staphylococcal cytoplasmic proteins from degradation by SspB. Cysteine protease that plays an important role in the inhibition of host innate immune response. Degrades host elastin, fibrogen, fibronectin and kininogen. Blocks phagocytosis of opsonised S.aureus by neutrophils and monocytes by inducing their death in a proteolytic activity-dependent manner. Decreases surface expression of the 'don't eat me' signal CD31 on neutrophils. Cleaves host galectin-3/LGALS3, thereby inhibiting the neutrophil-activating ability of the lectin. The chain is Staphopain B (sspB) from Staphylococcus aureus (strain MRSA252).